Here is a 377-residue protein sequence, read N- to C-terminus: GDSL esterase/lipase 4 (377 aa).

An N-terminal signal peptide occupies residues 1 to 21 (MASPRFNSIIIILFICTISLS). The active-site Nucleophile is the S44. 5 N-linked (GlcNAc...) asparagine glycosylation sites follow: N135, N188, N194, N207, and N241. Residues D342 and H345 contribute to the active site. N-linked (GlcNAc...) asparagine glycosylation occurs at N364.

It belongs to the 'GDSL' lipolytic enzyme family.

Its subcellular location is the secreted. This Arabidopsis thaliana (Mouse-ear cress) protein is GDSL esterase/lipase 4 (GLIP4).